The primary structure comprises 71 residues: MKKDIHPKTFKATIRCHCGFEAQALSTKGELVQVEVCSNCHPFFTGKQRFLDTAGRIDRFRKKYANFEKKA.

Zn(2+) is bound by residues Cys-16, Cys-18, Cys-37, and Cys-40.

Belongs to the bacterial ribosomal protein bL31 family. Type A subfamily. Part of the 50S ribosomal subunit. The cofactor is Zn(2+).

In terms of biological role, binds the 23S rRNA. This chain is Large ribosomal subunit protein bL31, found in Solidesulfovibrio magneticus (strain ATCC 700980 / DSM 13731 / RS-1) (Desulfovibrio magneticus).